The primary structure comprises 351 residues: MRPIPSLQNNFEYTDLTEPMILIPNVWGLTQQLGIFGVDRTTQESVTLEEITKSFGLMEDIHRGARHQVGRDYDRQMRTFAVPHFTYDDYITPRDIQGKRAYGKQELETLDQVRMRKLERLRGTHAATMEFARMHTLVTGKPYTPNNTVGGATGYDWYQEFGKTRFEVNFELDTPTTNILEKSELVYAHMQDEAYTGGVVGDVIAICSPEFFSKLISHPTVVEAYKYYASQPQILRERLRARGFDARYREFYFGNVLYIEYRGGFQGRPGGEKRRYVPAGEAVFIPGSGTEDLFKTFFAPASKFEHVNTPGEESYAFEYVDPKGEFLEINSETNFINVLMYPQLVVKGKAA.

This sequence belongs to the lambda phage major capsid protein family. As to quaternary structure, homomultimer.

Its subcellular location is the virion. The protein localises to the host cytoplasm. Its function is as follows. Assembles to form an icosahedral capsid. The assembly is primed by the interaction between capsid assembly protease and portal dodecamer, and major capsid proteins assemble cooperatively to form the procapsid with the help of capsid scaffolding protein. Major capsid protein forms hexons and pentons of the icosahedron. Viral genomic DNA is packaged into the procapsid through the portal vertex. The packaging triggers a dramatic reconfiguration of the capsid shell. In Pseudomonas phage KPP10 (Bacteriophage KPP10), this protein is Major capsid protein.